Here is a 432-residue protein sequence, read N- to C-terminus: 5'-deoxyadenosine deaminase (432 aa).

Zn(2+)-binding residues include His63 and His65. Glu92 and His184 together coordinate substrate. Residue His211 coordinates Zn(2+). Substrate is bound by residues Glu214 and Asp299. A Zn(2+)-binding site is contributed by Asp299.

It belongs to the metallo-dependent hydrolases superfamily. MTA/SAH deaminase family. Homotetramer. Zn(2+) serves as cofactor.

It carries out the reaction 5'-deoxyadenosine + H2O + H(+) = 5'-deoxyinosine + NH4(+). The enzyme catalyses S-adenosyl-L-homocysteine + H2O + H(+) = S-inosyl-L-homocysteine + NH4(+). The catalysed reaction is S-methyl-5'-thioadenosine + H2O + H(+) = S-methyl-5'-thioinosine + NH4(+). It catalyses the reaction adenosine + H2O + H(+) = inosine + NH4(+). The protein operates within amino-acid biosynthesis; S-adenosyl-L-methionine biosynthesis. Functionally, catalyzes the deamination of three SAM-derived enzymatic products, namely 5'-deoxyadenosine, S-adenosyl-L-homocysteine, and 5'-methylthioadenosine, to produce the inosine analogs. Can also deaminate adenosine. The preferred substrate for this enzyme is 5'-deoxyadenosine, but all these substrates are efficiently deaminated. Likely functions in a S-adenosyl-L-methionine (SAM) recycling pathway from S-adenosyl-L-homocysteine (SAH) produced from SAM-dependent methylation reactions. May also be involved in the recycling of 5'-deoxyadenosine, whereupon the 5'-deoxyribose moiety of 5'-deoxyinosine is further metabolized to deoxyhexoses used for the biosynthesis of aromatic amino acids in methanogens. The protein is 5'-deoxyadenosine deaminase of Methanosarcina mazei (strain ATCC BAA-159 / DSM 3647 / Goe1 / Go1 / JCM 11833 / OCM 88) (Methanosarcina frisia).